The following is a 369-amino-acid chain: Pyruvate dehydrogenase E1 component subunit alpha (369 aa).

As to quaternary structure, heterodimer of an alpha and a beta chain. Requires thiamine diphosphate as cofactor.

The catalysed reaction is N(6)-[(R)-lipoyl]-L-lysyl-[protein] + pyruvate + H(+) = N(6)-[(R)-S(8)-acetyldihydrolipoyl]-L-lysyl-[protein] + CO2. The pyruvate dehydrogenase complex catalyzes the overall conversion of pyruvate to acetyl-CoA and CO(2). It contains multiple copies of three enzymatic components: pyruvate dehydrogenase (E1), dihydrolipoamide acetyltransferase (E2) and lipoamide dehydrogenase (E3). The chain is Pyruvate dehydrogenase E1 component subunit alpha (pdhA) from Geobacillus stearothermophilus (Bacillus stearothermophilus).